The sequence spans 174 residues: Large ribosomal subunit protein uL10 (174 aa).

The protein belongs to the universal ribosomal protein uL10 family. Part of the ribosomal stalk of the 50S ribosomal subunit. The N-terminus interacts with L11 and the large rRNA to form the base of the stalk. The C-terminus forms an elongated spine to which L12 dimers bind in a sequential fashion forming a multimeric L10(L12)X complex.

Forms part of the ribosomal stalk, playing a central role in the interaction of the ribosome with GTP-bound translation factors. In Vesicomyosocius okutanii subsp. Calyptogena okutanii (strain HA), this protein is Large ribosomal subunit protein uL10.